Here is a 325-residue protein sequence, read N- to C-terminus: DDB1- and CUL4-associated factor 7 homolog (325 aa).

WD repeat units lie at residues Glu-62–Lys-104, Glu-115–Gln-155, Ala-158–Ile-197, and Phe-247–Glu-287.

This sequence belongs to the WD repeat DCAF7 family.

In Dictyostelium discoideum (Social amoeba), this protein is DDB1- and CUL4-associated factor 7 homolog (wdr68).